A 210-amino-acid polypeptide reads, in one-letter code: Na(+)-translocating NADH-quinone reductase subunit D (210 aa).

A run of 6 helical transmembrane segments spans residues 14–34 (PIVN…ALAV), 42–62 (LVMA…ISMI), 72–92 (IIVQ…LLQA), 103–123 (VFVG…AYAM), 131–151 (FMDG…VGFV), and 178–198 (NGLL…IWII).

It belongs to the NqrDE/RnfAE family. In terms of assembly, composed of six subunits; NqrA, NqrB, NqrC, NqrD, NqrE and NqrF.

The protein resides in the cell inner membrane. The enzyme catalyses a ubiquinone + n Na(+)(in) + NADH + H(+) = a ubiquinol + n Na(+)(out) + NAD(+). NQR complex catalyzes the reduction of ubiquinone-1 to ubiquinol by two successive reactions, coupled with the transport of Na(+) ions from the cytoplasm to the periplasm. NqrA to NqrE are probably involved in the second step, the conversion of ubisemiquinone to ubiquinol. The sequence is that of Na(+)-translocating NADH-quinone reductase subunit D from Shewanella baltica (strain OS223).